We begin with the raw amino-acid sequence, 505 residues long: ATP synthase subunit alpha, chloroplastic (505 aa).

Residue 170 to 177 (GDRQTGKT) coordinates ATP.

It belongs to the ATPase alpha/beta chains family. In terms of assembly, F-type ATPases have 2 components, CF(1) - the catalytic core - and CF(0) - the membrane proton channel. CF(1) has five subunits: alpha(3), beta(3), gamma(1), delta(1), epsilon(1). CF(0) has four main subunits: a, b, b' and c.

It is found in the plastid. The protein resides in the chloroplast thylakoid membrane. The enzyme catalyses ATP + H2O + 4 H(+)(in) = ADP + phosphate + 5 H(+)(out). In terms of biological role, produces ATP from ADP in the presence of a proton gradient across the membrane. The alpha chain is a regulatory subunit. The chain is ATP synthase subunit alpha, chloroplastic from Oenothera biennis (German evening primrose).